Here is a 425-residue protein sequence, read N- to C-terminus: Enolase 2 (425 aa).

A (2R)-2-phosphoglycerate-binding site is contributed by Gln-163. The active-site Proton donor is the Glu-205. Residues Asp-242, Glu-285, and Asp-312 each coordinate Mg(2+). Positions 337, 366, 367, and 388 each coordinate (2R)-2-phosphoglycerate. The Proton acceptor role is filled by Lys-337.

This sequence belongs to the enolase family. Mg(2+) serves as cofactor.

It is found in the cytoplasm. The protein resides in the secreted. It localises to the cell surface. It catalyses the reaction (2R)-2-phosphoglycerate = phosphoenolpyruvate + H2O. It participates in carbohydrate degradation; glycolysis; pyruvate from D-glyceraldehyde 3-phosphate: step 4/5. Its function is as follows. Catalyzes the reversible conversion of 2-phosphoglycerate (2-PG) into phosphoenolpyruvate (PEP). It is essential for the degradation of carbohydrates via glycolysis. This chain is Enolase 2, found in Cupriavidus metallidurans (strain ATCC 43123 / DSM 2839 / NBRC 102507 / CH34) (Ralstonia metallidurans).